Reading from the N-terminus, the 182-residue chain is Dual-action ribosomal maturation protein DarP (182 aa).

The disordered stretch occupies residues 1–25 (MEENLADNSEREARPSKTKRKKEMH).

It belongs to the DarP family.

The protein localises to the cytoplasm. Member of a network of 50S ribosomal subunit biogenesis factors which assembles along the 30S-50S interface, preventing incorrect 23S rRNA structures from forming. Promotes peptidyl transferase center (PTC) maturation. The sequence is that of Dual-action ribosomal maturation protein DarP from Nitrosospira multiformis (strain ATCC 25196 / NCIMB 11849 / C 71).